The following is a 420-amino-acid chain: Diaminopimelate decarboxylase (420 aa).

Lys54 carries the N6-(pyridoxal phosphate)lysine modification. His191 is a substrate binding site. Pyridoxal 5'-phosphate-binding positions include Gly227 and 268–271; that span reads EPGR. Substrate is bound by residues Arg271, Arg307, and Tyr311. Cys342 functions as the Proton donor in the catalytic mechanism. Positions 343 and 378 each coordinate substrate. Residue Tyr378 coordinates pyridoxal 5'-phosphate.

It belongs to the Orn/Lys/Arg decarboxylase class-II family. LysA subfamily. It depends on pyridoxal 5'-phosphate as a cofactor.

It carries out the reaction meso-2,6-diaminopimelate + H(+) = L-lysine + CO2. It functions in the pathway amino-acid biosynthesis; L-lysine biosynthesis via DAP pathway; L-lysine from DL-2,6-diaminopimelate: step 1/1. With respect to regulation, is activated by 2,3-dimercaptopropan-1-ol. Functionally, specifically catalyzes the decarboxylation of meso-diaminopimelate (meso-DAP) to L-lysine. Is not active against the DD- or LL-isomers of diaminopimelate. This chain is Diaminopimelate decarboxylase, found in Escherichia coli (strain K12).